A 451-amino-acid polypeptide reads, in one-letter code: MSIQSGEILETVKMVADQNFDVRTITIGIDLHDCISSDINVLNQNIYNKITTVGKDLVTTAKYLSAKYGVPIVNQRISVTPIAQIAAATHADSYVSVAQTLDKAAKAIGVSFIGGFSALVQKGMSPSDEVLIRSIPEAMKTTDIVCSSINIGSTRAGINMDAVKLAGETVKRTAEITPEGFGCAKIVVFCNAVEDNPFMAGAFHGSGEADAVINVGVSGPGVVKAALENSDATTLTEVAEVVKKTAFKITRVGELIGREASKMLNIPFGILDLSLAPTPAVGDSVARILEEMGLSVCGTHGTTAALALLNDAVKKGGMMASSAVGGLSGAFIPVSEDEGMIAAAEAGVLTLDKLEAMTAVCSVGLDMIAVPGDTPAHTISGIIADEAAIGMINSKTTAVRIIPVTGKTVGDSVEFGGLLGYAPVMPVKEGSCEVFVNRGGRIPAPVQSMKN.

Belongs to the UPF0210 family. In terms of assembly, homodimer.

The protein is UPF0210 protein NMB1652 of Neisseria meningitidis serogroup B (strain ATCC BAA-335 / MC58).